The chain runs to 124 residues: Small ribosomal subunit protein uS12 (124 aa).

Positions 9 to 28 are disordered; that stretch reads KSERTVQKNQTKSPALDSCP. A 3-methylthioaspartic acid modification is found at Asp-89.

The protein belongs to the universal ribosomal protein uS12 family. As to quaternary structure, part of the 30S ribosomal subunit. Contacts proteins S8 and S17. May interact with IF1 in the 30S initiation complex.

Functionally, with S4 and S5 plays an important role in translational accuracy. Its function is as follows. Interacts with and stabilizes bases of the 16S rRNA that are involved in tRNA selection in the A site and with the mRNA backbone. Located at the interface of the 30S and 50S subunits, it traverses the body of the 30S subunit contacting proteins on the other side and probably holding the rRNA structure together. The combined cluster of proteins S8, S12 and S17 appears to hold together the shoulder and platform of the 30S subunit. In Bdellovibrio bacteriovorus (strain ATCC 15356 / DSM 50701 / NCIMB 9529 / HD100), this protein is Small ribosomal subunit protein uS12.